Consider the following 479-residue polypeptide: MSSPGIDGDPKPPCLPRNGLVKLPGQPNGLGAASITKGTPAAKNRPCQPPPPPTLPPPSLATPLSRVALAGGPCPPASGPASGPVSGPPVERPPLATDEKILNGLFWYFSACEKCILAQVCKAWRRVLYQPKFWAGLTPVLHAKELYNVLPGGEKEFVNLQGFAARGFEGFCLVGVSDLDICEFIDNYSLSKKGVKAMSLKRSTITDAGLEVMLEQMQGVVRLELSGCNDFTEAGLWSSLSARITSLSVSDCINVADDAIAAISQLLPNLAELSLQAYHVTDTALAYFTARQGHSTHTLRLLSCWEITNHGVVNVVHSLPNLTSLSLSGCSKVTDDGVELVAENLRKLRSLDLSWCPRITDMALEYVACDLHRLEELVLDRCVRITDTGLSYLSTMSSLRSLYLRWCCQVQDFGLKHLLAMRNLRLLSLAGCPLLTTTGLSGLVQLQELEELELTNCPGATPELFKYFSQHLPRCLVIE.

Positions 1–92 (MSSPGIDGDP…GPVSGPPVER (92 aa)) are disordered. Residues 47-60 (CQPPPPPTLPPPSL) show a composition bias toward pro residues. Residue Arg92 is modified to Omega-N-methylarginine. In terms of domain architecture, F-box spans 94-139 (PLATDEKILNGLFWYFSACEKCILAQVCKAWRRVLYQPKFWAGLTP). LRR repeat units lie at residues 321-342 (NLTS…ELVA), 347-369 (KLRS…YVAC), 373-394 (RLEE…SYLS), 398-419 (SLRS…KHLL), 423-444 (NLRL…SGLV), and 446-470 (LQEL…YFSQ).

Interacts with SKP1 and CUL1.

Functionally, substrate-recognition component of the SCF (SKP1-CUL1-F-box protein)-type E3 ubiquitin ligase complex. The sequence is that of F-box/LRR-repeat protein 16 (Fbxl16) from Mus musculus (Mouse).